Here is a 310-residue protein sequence, read N- to C-terminus: p-hydroxybenzoic acid efflux pump subunit AaeA (310 aa).

Residues 12–32 traverse the membrane as a helical segment; the sequence is AITLVLVILAFIAIFRAWVYY.

Belongs to the membrane fusion protein (MFP) (TC 8.A.1) family.

The protein localises to the cell inner membrane. Forms an efflux pump with AaeB. The sequence is that of p-hydroxybenzoic acid efflux pump subunit AaeA from Salmonella arizonae (strain ATCC BAA-731 / CDC346-86 / RSK2980).